Reading from the N-terminus, the 529-residue chain is DTHGLPIERAVEKELSKKKIRKESLPKTEFRKLCREYANRYVNIQKEEFIRLGVLGDWENPYLTMSPEYEATEIRELGKFFEKGLAYRSKKPVYWCIYDKTAEGQAEVEYYEKEDPSIYVKFPLKKEIEGKKAYAVIWTTTPWTLPANLGIMVKEDADYSLVEVEGEVWIVAKELLENFFKNIGKTYTRVLKDVKGRDLVGLEYEHPFVDRDELKGYLSEETLKNMWRIYPSEFVSLDTGTGLVHMAPGHGQEDYTVGKRYNLEPYAPLDDSGRFVEPAPEFIRGVRVFDANKLIIALLKEKGYLVHEARIRHSYPHCWRCKNPVIFRATPQWFIGMDIEYEGKTLSGESLEEIEKVKWIPEYGKNRIKSMVENRPDWCISRQRFWGVPITVFYCENCGEVIKDKEVFERIASLVEKHPGGTDVWFEKSPEEILPEGYKCPKCGGTSFRKEEDILDVWFDSGCSHASVIRPLGFEKADLYLEGSDQHRGWFQASLLESVGSYGEAPYRSVLTHGFIVDEQGRKMSKSLV.

Position 482 (glutamate 482) interacts with L-isoleucyl-5'-AMP. Positions 523-527 match the 'KMSKS' region motif; sequence KMSKS. Position 526 (lysine 526) interacts with ATP.

The protein belongs to the class-I aminoacyl-tRNA synthetase family. IleS type 1 subfamily. As to quaternary structure, monomer.

It localises to the cytoplasm. The enzyme catalyses tRNA(Ile) + L-isoleucine + ATP = L-isoleucyl-tRNA(Ile) + AMP + diphosphate. Catalyzes the attachment of isoleucine to tRNA(Ile). As IleRS can inadvertently accommodate and process structurally similar amino acids such as valine, to avoid such errors it has two additional distinct tRNA(Ile)-dependent editing activities. One activity is designated as 'pretransfer' editing and involves the hydrolysis of activated Val-AMP. The other activity is designated 'posttransfer' editing and involves deacylation of mischarged Val-tRNA(Ile). This chain is Isoleucine--tRNA ligase (ileS), found in Aquifex pyrophilus.